A 235-amino-acid chain; its full sequence is Octanoyltransferase LIP2, mitochondrial (235 aa).

Residues M1–K32 constitute a mitochondrion transit peptide. In terms of domain architecture, BPL/LPL catalytic spans H34–D218. Substrate contacts are provided by residues R79–H86, A147–G149, and G160–A162. Residue C178 is the Acyl-thioester intermediate of the active site.

It belongs to the LipB family. As to expression, expressed in leaves. Expressed in roots, rosette leaves, cauline leaves, stems and siliques.

Its subcellular location is the mitochondrion. The enzyme catalyses octanoyl-[ACP] + L-lysyl-[protein] = N(6)-octanoyl-L-lysyl-[protein] + holo-[ACP] + H(+). The protein operates within protein modification; protein lipoylation via endogenous pathway; protein N(6)-(lipoyl)lysine from octanoyl-[acyl-carrier-protein]: step 1/2. In terms of biological role, catalyzes the transfer of endogenously produced octanoic acid from octanoyl-acyl-carrier-protein onto the lipoyl domains of lipoate-dependent enzymes. Lipoyl-ACP can also act as a substrate although octanoyl-ACP is likely to be the physiological substrate. Together with LIP1 is essential for mitochondrial protein lipoylation during seed development. Required for the lipoylation of mitochondrial 2-oxoglutarate dehydrogenase component E2 proteins in leaves and roots. The chain is Octanoyltransferase LIP2, mitochondrial from Arabidopsis thaliana (Mouse-ear cress).